Consider the following 942-residue polypeptide: Eukaryotic translation initiation factor 3 subunit A (942 aa).

The 175-residue stretch at phenylalanine 320–phenylalanine 494 folds into the PCI domain. 4 coiled-coil regions span residues lysine 499 to isoleucine 529, isoleucine 588 to glutamate 669, serine 705 to lysine 734, and isoleucine 821 to glutamine 912. A disordered region spans residues glycine 502–proline 546. Positions valine 504–asparagine 538 are enriched in acidic residues. 2 stretches are compositionally biased toward basic and acidic residues: residues arginine 836–serine 870 and arginine 889–alanine 911. The segment at arginine 836 to lysine 942 is disordered.

The protein belongs to the eIF-3 subunit A family. Component of the eukaryotic translation initiation factor 3 (eIF-3) complex.

The protein localises to the cytoplasm. Functionally, RNA-binding component of the eukaryotic translation initiation factor 3 (eIF-3) complex, which is involved in protein synthesis of a specialized repertoire of mRNAs and, together with other initiation factors, stimulates binding of mRNA and methionyl-tRNAi to the 40S ribosome. The eIF-3 complex specifically targets and initiates translation of a subset of mRNAs involved in cell proliferation. The polypeptide is Eukaryotic translation initiation factor 3 subunit A (Vanderwaltozyma polyspora (strain ATCC 22028 / DSM 70294 / BCRC 21397 / CBS 2163 / NBRC 10782 / NRRL Y-8283 / UCD 57-17) (Kluyveromyces polysporus)).